The chain runs to 484 residues: Suppressor of fused homolog (484 aa).

Residues 1 to 21 (MAELRPSVAPGPAAPPASGPS) are disordered. Residues 12-21 (PAAPPASGPS) show a composition bias toward pro residues. A Glycyl lysine isopeptide (Lys-Gly) (interchain with G-Cter in ubiquitin) cross-link involves residue Lys257. The segment at 279-360 (SRPPEDEEDS…SSTAIIPHEL (82 aa)) is disordered. Ser301 carries the phosphoserine modification. Position 303 is an N6-acetyllysine (Lys303). Residue Lys321 forms a Glycyl lysine isopeptide (Lys-Gly) (interchain with G-Cter in SUMO2) linkage. Over residues 336–347 (THDRAPSRKDSL) the composition is skewed to basic and acidic residues. Phosphoserine is present on residues Ser342, Ser346, and Ser352. At Thr353 the chain carries Phosphothreonine. Ser481 bears the Phosphoserine mark.

This sequence belongs to the SUFU family. In terms of assembly, may form homodimers. Interacts with ULK3; inactivating the protein kinase activity of ULK3. Interacts with RAB23. Part of a DNA-bound corepressor complex containing SAP18, GLI1 and SIN3. Part of a complex containing CTNNB1. Binds BTRC, GLI2, GLI3, SAP18 and STK36. Binds both free and DNA-bound GLI1. Interacts with KIF7. Interacts with GLI3FL and this interaction regulates the formation of either repressor or activator forms of GLI3. Its association with GLI3FL is regulated by Hh signaling and dissociation of the SUFU-GLI3 interaction requires the presence of the ciliary motor KIF3A. Post-translationally, polyubiquitinated at Lys-257 by the SCF(FBXL17) complex, leading to its subsequent degradation and allowing the release of GLI1 for proper hedgehog/smoothened signal transduction. Ubiquitination is impaired by phosphorylation at Ser-342, Ser-346, Ser-352 and Thr-353. In terms of processing, phosphorylation at Ser-342, Ser-346, Ser-352 and Thr-353 prevents ubiquitination by the SCF(FBXL17) complex. As to expression, widely expressed in adult and fetal tissues.

The protein resides in the cytoplasm. It is found in the nucleus. Its function is as follows. Negative regulator in the hedgehog/smoothened signaling pathway. Down-regulates GLI1-mediated transactivation of target genes. Part of a corepressor complex that acts on DNA-bound GLI1. May also act by linking GLI1 to BTRC and thereby targeting GLI1 to degradation by the proteasome. Sequesters GLI1, GLI2 and GLI3 in the cytoplasm, this effect is overcome by binding of STK36 to both SUFU and a GLI protein. Negative regulator of beta-catenin signaling. Regulates the formation of either the repressor form (GLI3R) or the activator form (GLI3A) of the full-length form of GLI3 (GLI3FL). GLI3FL is complexed with SUFU in the cytoplasm and is maintained in a neutral state. Without the Hh signal, the SUFU-GLI3 complex is recruited to cilia, leading to the efficient processing of GLI3FL into GLI3R. When Hh signaling is initiated, SUFU dissociates from GLI3FL and the latter translocates to the nucleus, where it is phosphorylated, destabilized, and converted to a transcriptional activator (GLI3A). Required for normal embryonic development. Required for the proper formation of hair follicles and the control of epidermal differentiation. This Mus musculus (Mouse) protein is Suppressor of fused homolog.